Reading from the N-terminus, the 679-residue chain is UvrABC system protein B (679 aa).

Residues 25–176 (YGVNQGKQYQ…NVRESLRELV (152 aa)) enclose the Helicase ATP-binding domain. Residue 38-45 (GATGTGKT) participates in ATP binding. Positions 91–114 (YYDYYQPEAYVPVSDTYIAKTSSV) match the Beta-hairpin motif. The Helicase C-terminal domain maps to 429 to 591 (QIDDLLDEIR…IIPKPAGKKP (163 aa)). The region spanning 639–674 (PEIIDKLEGKMNLAAEELDFEQAAKLRDRIRQLRKK) is the UVR domain.

This sequence belongs to the UvrB family. In terms of assembly, forms a heterotetramer with UvrA during the search for lesions. Interacts with UvrC in an incision complex.

Its subcellular location is the cytoplasm. Its function is as follows. The UvrABC repair system catalyzes the recognition and processing of DNA lesions. A damage recognition complex composed of 2 UvrA and 2 UvrB subunits scans DNA for abnormalities. Upon binding of the UvrA(2)B(2) complex to a putative damaged site, the DNA wraps around one UvrB monomer. DNA wrap is dependent on ATP binding by UvrB and probably causes local melting of the DNA helix, facilitating insertion of UvrB beta-hairpin between the DNA strands. Then UvrB probes one DNA strand for the presence of a lesion. If a lesion is found the UvrA subunits dissociate and the UvrB-DNA preincision complex is formed. This complex is subsequently bound by UvrC and the second UvrB is released. If no lesion is found, the DNA wraps around the other UvrB subunit that will check the other stand for damage. The protein is UvrABC system protein B of Prochlorococcus marinus (strain MIT 9211).